We begin with the raw amino-acid sequence, 144 residues long: Large ribosomal subunit protein uL16 (144 aa).

It belongs to the universal ribosomal protein uL16 family. As to quaternary structure, part of the 50S ribosomal subunit.

Binds 23S rRNA and is also seen to make contacts with the A and possibly P site tRNAs. The chain is Large ribosomal subunit protein uL16 from Bacillus anthracis (strain A0248).